The sequence spans 145 residues: ATP synthase epsilon chain (145 aa).

It belongs to the ATPase epsilon chain family. In terms of assembly, F-type ATPases have 2 components, CF(1) - the catalytic core - and CF(0) - the membrane proton channel. CF(1) has five subunits: alpha(3), beta(3), gamma(1), delta(1), epsilon(1). CF(0) has three main subunits: a, b and c.

Its subcellular location is the cell inner membrane. Its function is as follows. Produces ATP from ADP in the presence of a proton gradient across the membrane. This Francisella tularensis subsp. holarctica (strain FTNF002-00 / FTA) protein is ATP synthase epsilon chain.